A 40-amino-acid polypeptide reads, in one-letter code: Dolichyl-diphosphooligosaccharide--protein glycosyltransferase subunit 4 (40 aa).

The Lumenal portion of the chain corresponds to 1–4 (MITD). A helical transmembrane segment spans residues 5–25 (VQLAIFSNVLGVFLFLLVVAY). Residues 26–40 (HYINANTGKPIPKAK) are Cytoplasmic-facing.

It belongs to the OST4 family. In terms of assembly, component of the oligosaccharyltransferase (OST) complex.

The protein resides in the endoplasmic reticulum membrane. Its function is as follows. Subunit of the oligosaccharyl transferase (OST) complex that catalyzes the initial transfer of a defined glycan (Glc(3)Man(9)GlcNAc(2) in eukaryotes) from the lipid carrier dolichol-pyrophosphate to an asparagine residue within an Asn-X-Ser/Thr consensus motif in nascent polypeptide chains, the first step in protein N-glycosylation. N-glycosylation occurs cotranslationally and the complex associates with the Sec61 complex at the channel-forming translocon complex that mediates protein translocation across the endoplasmic reticulum (ER). All subunits are required for a maximal enzyme activity. The sequence is that of Dolichyl-diphosphooligosaccharide--protein glycosyltransferase subunit 4 from Drosophila ananassae (Fruit fly).